The chain runs to 172 residues: Protein GrpE (172 aa).

The segment at Met1–Leu23 is disordered.

The protein belongs to the GrpE family. Homodimer.

The protein resides in the cytoplasm. Its function is as follows. Participates actively in the response to hyperosmotic and heat shock by preventing the aggregation of stress-denatured proteins, in association with DnaK and GrpE. It is the nucleotide exchange factor for DnaK and may function as a thermosensor. Unfolded proteins bind initially to DnaJ; upon interaction with the DnaJ-bound protein, DnaK hydrolyzes its bound ATP, resulting in the formation of a stable complex. GrpE releases ADP from DnaK; ATP binding to DnaK triggers the release of the substrate protein, thus completing the reaction cycle. Several rounds of ATP-dependent interactions between DnaJ, DnaK and GrpE are required for fully efficient folding. This Xylella fastidiosa (strain 9a5c) protein is Protein GrpE.